A 226-amino-acid polypeptide reads, in one-letter code: Chalcone--flavanone isomerase (226 aa).

Residues Thr-47, Asn-112, and Ser-189 each contribute to the substrate site.

Belongs to the chalcone isomerase family.

It catalyses the reaction a chalcone = a flavanone.. It participates in secondary metabolite biosynthesis; flavonoid biosynthesis. Catalyzes the intramolecular cyclization of bicyclic chalcones into tricyclic (S)-flavanones. Responsible for the isomerization of 4,2',4',6'-tetrahydroxychalcone (also termed chalcone) into naringenin. The polypeptide is Chalcone--flavanone isomerase (CHI) (Allium cepa (Onion)).